A 300-amino-acid chain; its full sequence is Inosose dehydratase (300 aa).

This sequence belongs to the IolE/MocC family. It depends on glutathione as a cofactor. The cofactor is Co(2+). Mn(2+) is required as a cofactor.

The catalysed reaction is scyllo-inosose = 3D-3,5/4-trihydroxycyclohexane-1,2-dione + H2O. Functionally, catalyzes the dehydration of inosose (2-keto-myo-inositol, 2KMI or 2,4,6/3,5-pentahydroxycyclohexanone) to 3D-(3,5/4)-trihydroxycyclohexane-1,2-dione (D-2,3-diketo-4-deoxy-epi-inositol). The chain is Inosose dehydratase from Mesomycoplasma hyopneumoniae (strain J / ATCC 25934 / NCTC 10110) (Mycoplasma hyopneumoniae).